We begin with the raw amino-acid sequence, 78 residues long: NAD(P)H-quinone oxidoreductase subunit O (78 aa).

It belongs to the complex I NdhO subunit family. As to quaternary structure, NDH-1 can be composed of about 15 different subunits; different subcomplexes with different compositions have been identified which probably have different functions.

The protein localises to the cellular thylakoid membrane. The enzyme catalyses a plastoquinone + NADH + (n+1) H(+)(in) = a plastoquinol + NAD(+) + n H(+)(out). It catalyses the reaction a plastoquinone + NADPH + (n+1) H(+)(in) = a plastoquinol + NADP(+) + n H(+)(out). Its function is as follows. NDH-1 shuttles electrons from an unknown electron donor, via FMN and iron-sulfur (Fe-S) centers, to quinones in the respiratory and/or the photosynthetic chain. The immediate electron acceptor for the enzyme in this species is believed to be plastoquinone. Couples the redox reaction to proton translocation, and thus conserves the redox energy in a proton gradient. Cyanobacterial NDH-1 also plays a role in inorganic carbon-concentration. This is NAD(P)H-quinone oxidoreductase subunit O from Prochlorococcus marinus (strain AS9601).